Consider the following 46-residue polypeptide: Large ribosomal subunit protein bL34 (46 aa).

It belongs to the bacterial ribosomal protein bL34 family.

This chain is Large ribosomal subunit protein bL34 (rpmH), found in Mycobacterium avium.